The sequence spans 117 residues: Fluoride-specific ion channel FluC 2 (117 aa).

Transmembrane regions (helical) follow at residues Met1–Ile21 and Phe46–Val66. Residues Gly71 and Thr74 each coordinate Na(+). A helical membrane pass occupies residues Leu95 to Tyr115.

Belongs to the fluoride channel Fluc/FEX (TC 1.A.43) family.

It localises to the cell membrane. The catalysed reaction is fluoride(in) = fluoride(out). With respect to regulation, na(+) is not transported, but it plays an essential structural role and its presence is essential for fluoride channel function. Fluoride-specific ion channel. Important for reducing fluoride concentration in the cell, thus reducing its toxicity. The chain is Fluoride-specific ion channel FluC 2 from Staphylococcus aureus (strain MSSA476).